The primary structure comprises 185 residues: UPF0149 protein PD_0802 (185 aa).

Belongs to the UPF0149 family.

In Xylella fastidiosa (strain Temecula1 / ATCC 700964), this protein is UPF0149 protein PD_0802.